Consider the following 551-residue polypeptide: Probable alpha-glucosidase (551 aa).

D212 acts as the Nucleophile in catalysis. E272 serves as the catalytic Proton donor.

This sequence belongs to the glycosyl hydrolase 13 family.

It catalyses the reaction Hydrolysis of terminal, non-reducing (1-&gt;4)-linked alpha-D-glucose residues with release of alpha-D-glucose.. The polypeptide is Probable alpha-glucosidase (aglA) (Rhizobium meliloti (strain 1021) (Ensifer meliloti)).